The following is a 191-amino-acid chain: Large ribosomal subunit protein bL9 (191 aa).

The tract at residues glutamate 149–glutamate 191 is disordered. The segment covering phenylalanine 179–glutamate 191 has biased composition (acidic residues).

The protein belongs to the bacterial ribosomal protein bL9 family.

Functionally, binds to the 23S rRNA. This chain is Large ribosomal subunit protein bL9 (rplI), found in Agrobacterium fabrum (strain C58 / ATCC 33970) (Agrobacterium tumefaciens (strain C58)).